The primary structure comprises 197 residues: uncharacterized protein (197 aa).

The next 4 helical transmembrane spans lie at 11-31 (IALI…ISAS), 85-105 (STFM…SIFV), 109-129 (AVVV…VVLF), and 174-194 (VGTG…YPFI).

The protein resides in the cell membrane. This is an uncharacterized protein from Methanocaldococcus jannaschii (strain ATCC 43067 / DSM 2661 / JAL-1 / JCM 10045 / NBRC 100440) (Methanococcus jannaschii).